We begin with the raw amino-acid sequence, 747 residues long: Small G protein signaling modulator 3 (747 aa).

The region spanning 111–302 is the Rab-GAP TBC domain; it reads GVPHSMRPQL…RLWDLFFYEG (192 aa). Residue S403 is modified to Phosphoserine. Residues 412 to 435 are a coiled coil; it reads EDDLEAMKAKNIKQTELVADLREA. The SH3 domain occupies 477 to 536; it reads GHPRRAKALLDFERHDDDELGFRKNDIITIVSQKDEHCWVGELNGLRGWFPAKFVEVLDE. Residues 552 to 715 form the RUN domain; that stretch reads GVTDLVRGTL…FAFSLSQDWE (164 aa).

It belongs to the small G protein signaling modulator family. Interacts with GJA1. Interaction with GJA1 induces its degradation. Interacts via its RUN domain with the C-terminal region of NF2. Interacts with RAB3A, RAB4A, RAB5A, RAB8A, RAB11A, RAP1A, RAP1B, RAP2A, RAP2B and PDCD6I. No interaction with RAB27A.

The protein localises to the cytoplasm. Its function is as follows. May play a cooperative role in NF2-mediated growth suppression of cells. In Bos taurus (Bovine), this protein is Small G protein signaling modulator 3.